The primary structure comprises 679 residues: Translation initiation factor IF-2 (679 aa).

A tr-type G domain is found at 178-347; sequence KRPPIITVMG…LLTSEMQELK (170 aa). The segment at 187-194 is G1; it reads GHVDHGKT. 187–194 is a GTP binding site; that stretch reads GHVDHGKT. The G2 stretch occupies residues 212–216; that stretch reads GITQH. Residues 233–236 are G3; the sequence is DTPG. GTP-binding positions include 233–237 and 287–290; these read DTPGH and NKMD. The tract at residues 287-290 is G4; the sequence is NKMD. The tract at residues 323 to 325 is G5; that stretch reads SAK.

It belongs to the TRAFAC class translation factor GTPase superfamily. Classic translation factor GTPase family. IF-2 subfamily.

Its subcellular location is the cytoplasm. Functionally, one of the essential components for the initiation of protein synthesis. Protects formylmethionyl-tRNA from spontaneous hydrolysis and promotes its binding to the 30S ribosomal subunits. Also involved in the hydrolysis of GTP during the formation of the 70S ribosomal complex. The polypeptide is Translation initiation factor IF-2 (Clostridium perfringens (strain ATCC 13124 / DSM 756 / JCM 1290 / NCIMB 6125 / NCTC 8237 / Type A)).